The sequence spans 345 residues: Variable large protein 23 (345 aa).

The N-terminal stretch at 1-18 is a signal peptide; the sequence is MRKRISAIIMTLFMVLVS. A lipid anchor (N-palmitoyl cysteine) is attached at Cys-19. Cys-19 carries S-diacylglycerol cysteine lipidation.

This sequence belongs to the variable large protein (Vlp) family. Delta subfamily.

The protein localises to the cell outer membrane. Functionally, the Vlp and Vsp proteins are antigenically distinct proteins, only one vlp or vsp gene is transcriptionally active at any one time. Switching between these genes is a mechanism of host immune response evasion. This is Variable large protein 23 from Borrelia hermsii.